The following is a 163-amino-acid chain: uncharacterized protein (163 aa).

This is an uncharacterized protein from Drosophila melanogaster (Fruit fly).